The following is a 262-amino-acid chain: Hydroxyethylthiazole kinase (262 aa).

A substrate-binding site is contributed by M41. ATP is bound by residues R117 and S163. G190 contributes to the substrate binding site.

Belongs to the Thz kinase family. It depends on Mg(2+) as a cofactor.

The enzyme catalyses 5-(2-hydroxyethyl)-4-methylthiazole + ATP = 4-methyl-5-(2-phosphooxyethyl)-thiazole + ADP + H(+). It functions in the pathway cofactor biosynthesis; thiamine diphosphate biosynthesis; 4-methyl-5-(2-phosphoethyl)-thiazole from 5-(2-hydroxyethyl)-4-methylthiazole: step 1/1. Functionally, catalyzes the phosphorylation of the hydroxyl group of 4-methyl-5-beta-hydroxyethylthiazole (THZ). This chain is Hydroxyethylthiazole kinase, found in Levilactobacillus brevis (strain ATCC 367 / BCRC 12310 / CIP 105137 / JCM 1170 / LMG 11437 / NCIMB 947 / NCTC 947) (Lactobacillus brevis).